A 298-amino-acid chain; its full sequence is Acetaldehyde dehydrogenase (298 aa).

NAD(+) is bound at residue 6 to 9 (SGNI). The active-site Acyl-thioester intermediate is Cys121. Residues 152-160 (SAGPGTRAN) and Asn271 contribute to the NAD(+) site.

It belongs to the acetaldehyde dehydrogenase family.

The enzyme catalyses acetaldehyde + NAD(+) + CoA = acetyl-CoA + NADH + H(+). This is Acetaldehyde dehydrogenase from Mycobacterium avium (strain 104).